The primary structure comprises 298 residues: Oligodendrocyte transcription factor 2 (298 aa).

The segment covering 1-13 (MDSDASLVSSRPS) has biased composition (polar residues). Disordered stretches follow at residues 1-60 (MDSD…SAEL) and 79-102 (SSSSSASSASSASSKKDKKQMTEP). The span at 26 to 41 (NKGGGGGGGGGGGFTG) shows a compositional bias: gly residues. Residues 79-91 (SSSSSASSASSAS) show a composition bias toward low complexity. Residues 106 to 160 (QLRLKINSRERKRMHDLNIAMDGLREVMPYAHGPSVRKLSKIATLLLARNYILML) enclose the bHLH domain.

Its subcellular location is the nucleus. Functionally, required for oligodendrocyte and motor neuron specification in the spinal cord. The chain is Oligodendrocyte transcription factor 2 (OLIG2) from Gallus gallus (Chicken).